We begin with the raw amino-acid sequence, 310 residues long: Integrin-binding sialoprotein (310 aa).

Positions M1–A16 are cleaved as a signal peptide. Phosphoserine occurs at positions 31, 62, 67, 75, 76, 98, and 106. The disordered stretch occupies residues Q61–R284. The span at S62–D74 shows a compositional bias: low complexity. Composition is skewed to acidic residues over residues S75–N87 and E96–A108. N-linked (GlcNAc...) asparagine glycosylation occurs at N110. Residue T144 is modified to Phosphothreonine. A compositionally biased stretch (acidic residues) spans D152–E174. S154 is subject to Phosphoserine. A compositionally biased stretch (polar residues) spans Q175–V187. 2 N-linked (GlcNAc...) asparagine glycosylation sites follow: N178 and N183. Positions N198–V208 are enriched in acidic residues. The span at T209 to N227 shows a compositional bias: polar residues. A Phosphoserine modification is found at S273. Residues R279–D281 carry the Integrin-binding motif motif. S300 is subject to Phosphoserine. Residues Y306 and Y307 each carry the sulfotyrosine modification.

Monomer. Interacts with integrins; the interaction promotes cell adhesion.

It is found in the secreted. Its function is as follows. Binds tightly to hydroxyapatite. Appears to form an integral part of the mineralized matrix. Probably important to cell-matrix interaction. Promotes adhesion and migration of various cells via the alpha-V/beta-3 integrin receptor (ITGAV:ITGB3). The protein is Integrin-binding sialoprotein (IBSP) of Bos taurus (Bovine).